The primary structure comprises 468 residues: ATP synthase subunit beta (468 aa).

155–162 (GGAGVGKT) lines the ATP pocket.

Belongs to the ATPase alpha/beta chains family. F-type ATPases have 2 components, CF(1) - the catalytic core - and CF(0) - the membrane proton channel. CF(1) has five subunits: alpha(3), beta(3), gamma(1), delta(1), epsilon(1). CF(0) has three main subunits: a(1), b(2) and c(9-12). The alpha and beta chains form an alternating ring which encloses part of the gamma chain. CF(1) is attached to CF(0) by a central stalk formed by the gamma and epsilon chains, while a peripheral stalk is formed by the delta and b chains.

It localises to the cell membrane. The enzyme catalyses ATP + H2O + 4 H(+)(in) = ADP + phosphate + 5 H(+)(out). Its function is as follows. Produces ATP from ADP in the presence of a proton gradient across the membrane. The catalytic sites are hosted primarily by the beta subunits. The chain is ATP synthase subunit beta from Streptococcus pyogenes serotype M5 (strain Manfredo).